The primary structure comprises 402 residues: MYLEHLSLTDFRSYAQVDLVLSPGVTVLVGYNGIGKTNLMEAIGYLATLSSHRVSSDGPLLRFGTERALVRARLVRNGQTTVLELEINAGRANRGRINRSNPVRARDLLGICQTVLFAPEDLALVKGDPSNRRRFLDELLASLVPHHAATRSDYDRVLKQRNALLKSARAGRVTAAHEATLDVWDQHMAKAGAELLHARLELVELLRPHLARAYAELTDASKPADAIYRSTLQNQMDDDGASLGATGRPGPGDAAAAEDLRGLSIEELTQRYVRAFGESRKKELERGISLVGPHRDDLELVLGQAPAKGYASHGETWSMCLSLRLASYYVMLDDARTGGSAPILILDDVFAELDVQRRRKLAAIVSGAEQVLVTAAVDADIPEELSGRRVKVVPGGIDEQGE.

30 to 37 (GYNGIGKT) lines the ATP pocket.

The protein belongs to the RecF family.

Its subcellular location is the cytoplasm. The RecF protein is involved in DNA metabolism; it is required for DNA replication and normal SOS inducibility. RecF binds preferentially to single-stranded, linear DNA. It also seems to bind ATP. The chain is DNA replication and repair protein RecF from Pseudarthrobacter chlorophenolicus (strain ATCC 700700 / DSM 12829 / CIP 107037 / JCM 12360 / KCTC 9906 / NCIMB 13794 / A6) (Arthrobacter chlorophenolicus).